The following is a 354-amino-acid chain: Protein-arginine kinase (354 aa).

Residues 24-254 (IVLSSRIRLA…QQIIHQEKTA (231 aa)) form the Phosphagen kinase C-terminal domain. ATP-binding positions include 27–31 (SSRIR), H92, R125, 176–180 (RASVM), and 207–212 (RGIYGE). An RDXXRA motif of the pArg binding pocket involved in allosteric regulation motif is present at residues 337 to 342 (RDYRRA).

It belongs to the ATP:guanido phosphotransferase family.

It carries out the reaction L-arginyl-[protein] + ATP = N(omega)-phospho-L-arginyl-[protein] + ADP + H(+). With respect to regulation, appears to be allosterically activated by the binding of pArg-containing polypeptides to the pArg-binding pocket localized in the C-terminal domain of McsB. Its function is as follows. Catalyzes the specific phosphorylation of arginine residues in a large number of proteins. Is part of the bacterial stress response system. Protein arginine phosphorylation has a physiologically important role and is involved in the regulation of many critical cellular processes, such as protein homeostasis, motility, competence, and stringent and stress responses, by regulating gene expression and protein activity. This is Protein-arginine kinase from Bacillus mycoides (strain KBAB4) (Bacillus weihenstephanensis).